The primary structure comprises 128 residues: Fluoride-specific ion channel FluC (128 aa).

Helical transmembrane passes span 1–21 (MPER…GATA), 45–65 (LAGC…SLVS), 70–90 (LLLA…MYEI), and 99–119 (IFYS…CLYF). Na(+) contacts are provided by glycine 78 and threonine 81.

Belongs to the fluoride channel Fluc/FEX (TC 1.A.43) family.

The protein resides in the cell inner membrane. The enzyme catalyses fluoride(in) = fluoride(out). Na(+) is not transported, but it plays an essential structural role and its presence is essential for fluoride channel function. Fluoride-specific ion channel. Important for reducing fluoride concentration in the cell, thus reducing its toxicity. The polypeptide is Fluoride-specific ion channel FluC (Chlorobium phaeobacteroides (strain BS1)).